The primary structure comprises 263 residues: Ubiquitin domain-containing protein 7SL RNA2 (263 aa).

The Ubiquitin-like 1 domain maps to 1–53 (MNVDIDTETGSSFSITIDFGETVLQIKEKIEKSQGIPVSKQILYLDGKALEDD). The segment at 74 to 93 (ADPNQSNEQTEQSKQIDDKK) is disordered. The span at 76–86 (PNQSNEQTEQS) shows a compositional bias: polar residues. Positions 184-263 (FTVHVKPYQE…GDTIELIREK (80 aa)) constitute a Ubiquitin-like 2 domain.

Belongs to the ubiquitin family. As to expression, expressed in seedlings, roots, stems, rosettes and flowers (at protein level).

Its subcellular location is the nucleus. Controls phase transition from the vegetative to the reproductive state. Involved in the maintenance of the shoot apical meristem (SAM) thus preventing inflorescence meristem (IM) formation and subsequent inflorescence stem development during flowering. Regulates leaf and organ morphology. This chain is Ubiquitin domain-containing protein 7SL RNA2, found in Arabidopsis thaliana (Mouse-ear cress).